A 115-amino-acid polypeptide reads, in one-letter code: uncharacterized protein (115 aa).

The MSP domain maps to 1–115 (MGVEISLDPP…ETVIKLSAAE (115 aa)).

This is an uncharacterized protein from Caenorhabditis elegans.